The primary structure comprises 521 residues: Importin subunit alpha-4 (521 aa).

The segment at 1-29 (MAENPSLENHRIKSFKNKGRDVETMRRHR) is disordered. Ala2 carries the N-acetylalanine modification. One can recognise an IBB domain in the interval 2 to 58 (AENPSLENHRIKSFKNKGRDVETMRRHRNEVTVELRKNKRDEHLLKKRNVPQEESLE). A compositionally biased stretch (basic and acidic residues) spans 18 to 29 (KGRDVETMRRHR). A Nuclear localization signal motif is present at residues 43–52 (EHLLKKRNVP). Phosphoserine occurs at positions 56 and 60. One copy of the ARM 1; truncated repeat lies at 66–106 (FKAQNVTLEAILQNATSDNPVVQLSAVQAARKLLSSDRNPP). ARM repeat units lie at residues 107-149 (IDDL…TSAQ), 150-194 (TQAV…CRDY), 195-233 (VISLGVVKPLLSFISPSIPITFLRNVTWVIVNLCRNKDP), 234-278 (PPPM…EQIQ), 279-318 (MVIDSGVVPFLVPLLSHQEVKVQTAALRAVGNIVTGTDEQ), 319-360 (TQVV…NQQQ), 361-400 (VQAVIDAGLIPMIIHQLAKGDFGTQKEAAWAISNLTISGR), and 401-443 (KDQV…IMAG). The tract at residues 137–229 (WALTNIASGT…VTWVIVNLCR (93 aa)) is NLS binding site (major). Residues 306–394 (RAVGNIVTGT…QKEAAWAISN (89 aa)) are NLS binding site (minor). The stretch at 447-485 (STIAEIIEECGGLEKIEVLQQHENEDIYKLAFEIIDQYF) is one ARM 10; atypical repeat. A Phosphotyrosine modification is found at Tyr484.

Belongs to the importin alpha family. In terms of assembly, forms a complex with importin subunit beta-1. Interacts with DDX21. Interacts with NCBP1, NCBP2/CBP20 and NCBP3. Interacts with RCC1. Interacts with ZC3H11A. As to quaternary structure, (Microbial infection) Interacts with HIV-1 integrase; this interaction might play a role in nuclear import of HIV pre-integration complex. (Microbial infection) Interacts with influenza virus nucleoprotein; this interaction might play a role in nuclear import of viral genome. Ubiquitous. Highest levels in heart and skeletal muscle.

Its subcellular location is the cytoplasm. The protein localises to the nucleus. In terms of biological role, functions in nuclear protein import as an adapter protein for nuclear receptor KPNB1. Binds specifically and directly to substrates containing either a simple or bipartite NLS motif. Docking of the importin/substrate complex to the nuclear pore complex (NPC) is mediated by KPNB1 through binding to nucleoporin FxFG repeats and the complex is subsequently translocated through the pore by an energy requiring, Ran-dependent mechanism. At the nucleoplasmic side of the NPC, Ran binds to importin-beta and the three components separate and importin-alpha and -beta are re-exported from the nucleus to the cytoplasm where GTP hydrolysis releases Ran from importin. The directionality of nuclear import is thought to be conferred by an asymmetric distribution of the GTP- and GDP-bound forms of Ran between the cytoplasm and nucleus. In vitro, mediates the nuclear import of human cytomegalovirus UL84 by recognizing a non-classical NLS. Recognizes NLSs of influenza A virus nucleoprotein probably through ARM repeats 7-9. In Homo sapiens (Human), this protein is Importin subunit alpha-4 (KPNA3).